The sequence spans 254 residues: Sulfoacetaldehyde reductase (254 aa).

8–32 is an NADP(+) binding site; it reads FITGATSGFGEAAAQVFADAGWSLV. Position 141 (serine 141) interacts with substrate. Tyrosine 154 serves as the catalytic Proton acceptor.

This sequence belongs to the short-chain dehydrogenases/reductases (SDR) family. As to quaternary structure, homodimer and heterotetramer.

The catalysed reaction is 2-hydroxyethane-1-sulfonate + NADP(+) = sulfoacetaldehyde + NADPH + H(+). It participates in organosulfur degradation. Functionally, catalyzes the formation of isethionate from 2-sulfoacetaldehyde in the deaminative pathway of taurine. The enzyme is specific for NADPH; NADH is not a substrate. This is Sulfoacetaldehyde reductase (isfD) from Klebsiella oxytoca.